The chain runs to 89 residues: Small ribosomal subunit protein uS15 (89 aa).

Residues 1–25 (MSLDTTEKQQLINTHQTHGTDTGSA) are disordered. The segment covering 8–25 (KQQLINTHQTHGTDTGSA) has biased composition (polar residues).

It belongs to the universal ribosomal protein uS15 family. As to quaternary structure, part of the 30S ribosomal subunit. Forms a bridge to the 50S subunit in the 70S ribosome, contacting the 23S rRNA.

Functionally, one of the primary rRNA binding proteins, it binds directly to 16S rRNA where it helps nucleate assembly of the platform of the 30S subunit by binding and bridging several RNA helices of the 16S rRNA. Its function is as follows. Forms an intersubunit bridge (bridge B4) with the 23S rRNA of the 50S subunit in the ribosome. The polypeptide is Small ribosomal subunit protein uS15 (Parasynechococcus marenigrum (strain WH8102)).